The primary structure comprises 237 residues: Terpene cyclase spyD (237 aa).

7 helical membrane-spanning segments follow: residues 17-37 (IYNV…IVTV), 47-67 (AIPL…VLVY), 71-91 (YLLF…IVYG), 109-129 (HLPL…YALA), 138-158 (IHGG…CQLL), 167-187 (SWTM…GEFL), and 206-226 (WCTG…WYMG).

Belongs to the paxB family.

The protein localises to the membrane. The catalysed reaction is (S)-(2E,6E,10E)-epoxygeranylgeranyl-triacetate lactone = sartorypyrone F. The enzyme catalyses (S)-(2E,6E,10E)-epoxygeranylgeranyl-triacetate lactone = sartorypyrone D. It functions in the pathway secondary metabolite biosynthesis; terpenoid biosynthesis. Terpene cyclase; part of the gene cluster that mediates the biosynthesis of meroterpenoids called sartorypyrones. Within the pathway, spyD catalyzes the cyclization of epoxygeranylgeranyl-triacetate lactone. SpyD exhibits promiscuous activity, resulting in the formation of bicyclic sartorypyrone F and monocyclic sartorypyrone D. The biosynthesis of sartorypyrones begins with the production of triacetic acid lactone (TAL) by the NR-PKS spyA using one molecule of acetyl-CoA and two molecules of malonyl-CoA. The prenyltransferase spyF then conjugates geranylgeranyl pyrophosphate (GGPP) to TAL to form geranylgeranyl-triacetate lactone, for which the pathway-specific geranylgeranyl pyrophosphate synthase (GGPS) spyE is required to provide GGPP. Subsequently, geranylgeranyl-triacetate lactone is epoxidized at the terminal olein by the FAD-dependent monooxygenase spyC, followed by cyclization of the terpenoid component catalyzed by the terpene cyclase spyD to produce both the bicyclic sartorypyrone F and the monocyclic sartorypyrone D. Finally, the last step of the biosynthesis involves the acetylation of the meroterpenoids sartorypyrones D and F by the acetyltransferase SpyB to produce sartorypyrones A and G, respectively. The polypeptide is Terpene cyclase spyD (Aspergillus fumigatus (strain ATCC MYA-4609 / CBS 101355 / FGSC A1100 / Af293) (Neosartorya fumigata)).